Consider the following 225-residue polypeptide: ATP synthase subunit a (225 aa).

A run of 6 helical transmembrane segments spans residues 18–38 (LSLNWTSTFLGLLLIPSMFWL), 73–93 (ILISIFIMMLFNNFMGLFPYI), 100–120 (MTLTFSIALPMWMSFMLFGWI), 126–146 (MFTHLVPQGTPNALMSFMVLI), 156–176 (GTLAVRLAANMIAGHLLLTLL), and 187–207 (IMLFLIIGQMLLLILESAVAM).

Belongs to the ATPase A chain family. F-type ATPases have 2 components, CF(1) - the catalytic core - and CF(0) - the membrane proton channel. CF(1) has five subunits: alpha(3), beta(3), gamma(1), delta(1), epsilon(1). CF(0) has three main subunits: a, b and c.

The protein localises to the mitochondrion inner membrane. In terms of biological role, mitochondrial membrane ATP synthase (F(1)F(0) ATP synthase or Complex V) produces ATP from ADP in the presence of a proton gradient across the membrane which is generated by electron transport complexes of the respiratory chain. F-type ATPases consist of two structural domains, F(1) - containing the extramembraneous catalytic core and F(0) - containing the membrane proton channel, linked together by a central stalk and a peripheral stalk. During catalysis, ATP synthesis in the catalytic domain of F(1) is coupled via a rotary mechanism of the central stalk subunits to proton translocation. Key component of the proton channel; it may play a direct role in the translocation of protons across the membrane. This chain is ATP synthase subunit a (ATP6), found in Locusta migratoria (Migratory locust).